The sequence spans 444 residues: Phosphoglucosamine mutase (444 aa).

Serine 104 (phosphoserine intermediate) is an active-site residue. Mg(2+) contacts are provided by serine 104, aspartate 243, aspartate 245, and aspartate 247. Serine 104 bears the Phosphoserine mark.

This sequence belongs to the phosphohexose mutase family. The cofactor is Mg(2+). Post-translationally, activated by phosphorylation.

The catalysed reaction is alpha-D-glucosamine 1-phosphate = D-glucosamine 6-phosphate. Catalyzes the conversion of glucosamine-6-phosphate to glucosamine-1-phosphate. This is Phosphoglucosamine mutase from Neisseria meningitidis serogroup B (strain ATCC BAA-335 / MC58).